The sequence spans 264 residues: Proteasome subunit beta type-4 (264 aa).

Residue methionine 1 is modified to N-acetylmethionine. The propeptide occupies 1–45 (MEAFWESRAGHWAGGPAPGQFYRIPATPSGLMDPASAPCEGPITR). Position 102 is a phosphotyrosine (tyrosine 102).

The protein belongs to the peptidase T1B family. In terms of assembly, the 26S proteasome consists of a 20S proteasome core and two 19S regulatory subunits. The 20S proteasome core is a barrel-shaped complex made of 28 subunits that are arranged in four stacked rings. The two outer rings are each formed by seven alpha subunits, and the two inner rings are formed by seven beta subunits. The proteolytic activity is exerted by three beta-subunits PSMB5, PSMB6 and PSMB7. Forms a ternary complex with SMAD1 and OAZ1 before PSMB4 is incorporated into the 20S proteasome. Interacts with PRPF19. In terms of tissue distribution, detected in liver (at protein level).

The protein resides in the cytoplasm. It localises to the nucleus. Non-catalytic component of the 20S core proteasome complex involved in the proteolytic degradation of most intracellular proteins. This complex plays numerous essential roles within the cell by associating with different regulatory particles. Associated with two 19S regulatory particles, forms the 26S proteasome and thus participates in the ATP-dependent degradation of ubiquitinated proteins. The 26S proteasome plays a key role in the maintenance of protein homeostasis by removing misfolded or damaged proteins that could impair cellular functions, and by removing proteins whose functions are no longer required. Associated with the PA200 or PA28, the 20S proteasome mediates ubiquitin-independent protein degradation. This type of proteolysis is required in several pathways including spermatogenesis (20S-PA200 complex) or generation of a subset of MHC class I-presented antigenic peptides (20S-PA28 complex). SMAD1/OAZ1/PSMB4 complex mediates the degradation of the CREBBP/EP300 repressor SNIP1. The sequence is that of Proteasome subunit beta type-4 (Psmb4) from Mus musculus (Mouse).